The chain runs to 377 residues: Putative glutamate--cysteine ligase 2 (377 aa).

This sequence belongs to the glutamate--cysteine ligase type 2 family. YbdK subfamily.

It catalyses the reaction L-cysteine + L-glutamate + ATP = gamma-L-glutamyl-L-cysteine + ADP + phosphate + H(+). ATP-dependent carboxylate-amine ligase which exhibits weak glutamate--cysteine ligase activity. The chain is Putative glutamate--cysteine ligase 2 from Pseudomonas aeruginosa (strain ATCC 15692 / DSM 22644 / CIP 104116 / JCM 14847 / LMG 12228 / 1C / PRS 101 / PAO1).